Here is a 411-residue protein sequence, read N- to C-terminus: Putative metal tolerance protein C3 (411 aa).

Over 1 to 115 (MEVNYCPETP…DRAERAAQEL (115 aa)) the chain is Cytoplasmic. The chain crosses the membrane as a helical span at residues 116 to 136 (AMQISNWANIFLLALKIYATV). The Vacuolar segment spans residues 137-140 (KSGS). A helical membrane pass occupies residues 141-161 (IAIAASTLDSLLDLMAGGILW). The Cytoplasmic segment spans residues 162-184 (FTHLSMKNVNIYKYPIGKLRVQP). A helical transmembrane segment spans residues 185–205 (VGIIIFAAVMATLGFQVLLVA). Over 206-222 (AEQLISNEPSEKMNHVQ) the chain is Vacuolar. Residues 223 to 243 (LIWLYSIMLSATAIKLVLWIY) form a helical membrane-spanning segment. The Cytoplasmic portion of the chain corresponds to 244–262 (CKSSRNHIVRAYAKDHHFD). A helical transmembrane segment spans residues 263-283 (VVTNVLGLVAAVLANAFYWWL). At 284–287 (DPTG) the chain is on the vacuolar side. Residues 288–308 (AILLAIYTIVNWSGTVMENAV) form a helical membrane-spanning segment. The Cytoplasmic portion of the chain corresponds to 309 to 390 (SLIGQSAPPE…LPEVERAFVH (82 aa)).

It belongs to the cation diffusion facilitator (CDF) transporter (TC 2.A.4) family.

It is found in the vacuole membrane. Functionally, involved in sequestration of excess metal in the cytoplasm into vacuoles to maintain metal homeostasis. This is Putative metal tolerance protein C3 (MTPC3) from Arabidopsis thaliana (Mouse-ear cress).